We begin with the raw amino-acid sequence, 423 residues long: MTYEKVLKYVQEKKFFETHYNILIAVSGGVDSMNLLHFLHIYQKKLQIRIAVAHVNHKQRPQADEEEIYLKNWARDNHIPFYTAVFKGIFSEKKARDFRYTFFKNIMKEHGYTALVTAHHANDQAETVFLRLLRGSRLRYLTGIKEIQEFGNGQLIRPFLKFHKKELPNIFHFDDDSNQGDSYLRNRIRNHYLPILTQENPKLSQHLIQMSEETNLLFKAFSDLTSQLDIQDCQIFRSQSEAIQYFLLQNYLRKFPNLEVSKAQFDNLLHILRTKDYYYDYLKNNYYLKKDKKRFKICKIGPETDRFEGEKVLEYGSMVKYGQYIFSFQEGSDSKKGIPVKNDFPIIIRRRKPGDKIKLGSHSKKLRRLFIDEKIPIFKRSNAIIVEQDSDIILILLDGVTYLRKGFKDDIMKGRLYIQNRNW.

27–32 (SGGVDS) is a binding site for ATP.

It belongs to the tRNA(Ile)-lysidine synthase family.

Its subcellular location is the cytoplasm. It catalyses the reaction cytidine(34) in tRNA(Ile2) + L-lysine + ATP = lysidine(34) in tRNA(Ile2) + AMP + diphosphate + H(+). Functionally, ligates lysine onto the cytidine present at position 34 of the AUA codon-specific tRNA(Ile) that contains the anticodon CAU, in an ATP-dependent manner. Cytidine is converted to lysidine, thus changing the amino acid specificity of the tRNA from methionine to isoleucine. This is tRNA(Ile)-lysidine synthase from Streptococcus mutans serotype c (strain ATCC 700610 / UA159).